The primary structure comprises 135 residues: Small ribosomal subunit protein uS11 (135 aa).

The tract at residues 1 to 20 (MGRQRQQRSRGSRSRRRVRK) is disordered.

The protein belongs to the universal ribosomal protein uS11 family. As to quaternary structure, part of the 30S ribosomal subunit. Interacts with proteins S7 and S18. Binds to IF-3.

Its function is as follows. Located on the platform of the 30S subunit, it bridges several disparate RNA helices of the 16S rRNA. Forms part of the Shine-Dalgarno cleft in the 70S ribosome. The sequence is that of Small ribosomal subunit protein uS11 from Rubrobacter xylanophilus (strain DSM 9941 / JCM 11954 / NBRC 16129 / PRD-1).